The chain runs to 185 residues: Ribosome-recycling factor (185 aa).

The protein belongs to the RRF family.

The protein localises to the cytoplasm. In terms of biological role, responsible for the release of ribosomes from messenger RNA at the termination of protein biosynthesis. May increase the efficiency of translation by recycling ribosomes from one round of translation to another. The protein is Ribosome-recycling factor of Hahella chejuensis (strain KCTC 2396).